The chain runs to 345 residues: Eukaryotic translation initiation factor 3 subunit F (345 aa).

In terms of domain architecture, MPN spans V30–G166. The interval G308–A345 is disordered. The span at Q322–G331 shows a compositional bias: gly residues. Positions N335–A345 are enriched in basic and acidic residues.

Belongs to the eIF-3 subunit F family. Component of the eukaryotic translation initiation factor 3 (eIF-3) complex.

It localises to the cytoplasm. In terms of biological role, component of the eukaryotic translation initiation factor 3 (eIF-3) complex, which is involved in protein synthesis of a specialized repertoire of mRNAs and, together with other initiation factors, stimulates binding of mRNA and methionyl-tRNAi to the 40S ribosome. The eIF-3 complex specifically targets and initiates translation of a subset of mRNAs involved in cell proliferation. The polypeptide is Eukaryotic translation initiation factor 3 subunit F (Aspergillus clavatus (strain ATCC 1007 / CBS 513.65 / DSM 816 / NCTC 3887 / NRRL 1 / QM 1276 / 107)).